We begin with the raw amino-acid sequence, 572 residues long: MRPIPYDISLSITSFLSLILICSANPIDNGLVDSELIHECVTHKAVEVILLLDASGSIGDDTFKKQLSFAMHLASRLNISEDGSHMALIQYAETPKLEFSLGQFNHPTQLEWAIQRIEYQSGATNTGQALRLTLEKGLQGARPGIPKVAIVITDGQSQDDVSEPSQLLRDADVMVYAIGVTNLVNVHQLHQMTGNPVRVFTVESFEQLDRALADSLTWSMCKTEFRPGTPEIICGPDRIGVKASTKQPFEGNVFVMDHYHDEECRAGPEKFPDSRSIGLTVPFSACNVHRYRSLNPKGIFVEVSIVFMFHSLFMTKTDQTVKVQCFYMEADKHVTVPLSVSMITTVFREQIYQMPQCAYTLRKGAPDGPIVRFATLGESVYHRWECIEVEGADKDTFGMLVHSCYVDNGYGDRVDILDSNGCGLDAVLLSTPDYDTSLRLATKPYHVFKYADRPVLQFQCQITLCLKYDGGCEGITPPQNCKKLPGEDGHHHHHHPEKRRKLVRRLADGVGTIDVFTDSVTVLEQEPACQQPLPYPLINTNLWIMGIITLTNIFVFILTVWFTFRKRRCKPA.

The signal sequence occupies residues 1 to 24 (MRPIPYDISLSITSFLSLILICSA). The Extracellular portion of the chain corresponds to 25-541 (NPIDNGLVDS…PLPYPLINTN (517 aa)). Residues 47–216 (EVILLLDASG…QLDRALADSL (170 aa)) form the VWFA domain. Asn78 carries an N-linked (GlcNAc...) asparagine glycan. A ZP domain is found at 233-479 (ICGPDRIGVK…GGCEGITPPQ (247 aa)). The helical transmembrane segment at 542–562 (LWIMGIITLTNIFVFILTVWF) threads the bilayer. At 563–572 (TFRKRRCKPA) the chain is on the cytoplasmic side.

Its subcellular location is the cell membrane. Its function is as follows. Plays a role in alae formation in dauer larvae probably by regulating cuticle assembly. In Caenorhabditis elegans, this protein is Cuticlin-6.